A 359-amino-acid polypeptide reads, in one-letter code: F-box/kelch-repeat protein At1g15670 (359 aa).

In terms of domain architecture, F-box spans Glu-2–Ala-49. 5 Kelch repeats span residues Asp-119–Ser-167, Asn-170–Gly-217, Phe-219–Gly-269, Asn-271–Arg-310, and Asn-313–Glu-358.

This is F-box/kelch-repeat protein At1g15670 from Arabidopsis thaliana (Mouse-ear cress).